The following is a 128-amino-acid chain: Ribonuclease pancreatic (128 aa).

The segment covering 1–13 (GESRAEKFQRQHM) has biased composition (basic and acidic residues). The interval 1-24 (GESRAEKFQRQHMDSGSSPSSSST) is disordered. Residues K7 and R10 each coordinate substrate. Catalysis depends on H12, which acts as the Proton acceptor. Intrachain disulfides connect C26–C84, C40–C95, C58–C110, and C65–C72. An N-linked (GlcNAc...) asparagine glycan is attached at N34. Substrate is bound by residues 41-45 (KSVNT), K66, and R85. H119 functions as the Proton donor in the catalytic mechanism.

It belongs to the pancreatic ribonuclease family. As to quaternary structure, monomer. Interacts with and forms tight 1:1 complexes with RNH1. Dimerization of two such complexes may occur. Interaction with RNH1 inhibits this protein. Pancreas and other tissues and body fluids (indicating it may have other physiological functions besides its role in digestion).

It is found in the secreted. It catalyses the reaction an [RNA] containing cytidine + H2O = an [RNA]-3'-cytidine-3'-phosphate + a 5'-hydroxy-ribonucleotide-3'-[RNA].. It carries out the reaction an [RNA] containing uridine + H2O = an [RNA]-3'-uridine-3'-phosphate + a 5'-hydroxy-ribonucleotide-3'-[RNA].. In terms of biological role, endonuclease that catalyzes the cleavage of RNA on the 3' side of pyrimidine nucleotides. Acts on single-stranded and double-stranded RNA. In Semnopithecus entellus (Northern plains gray langur), this protein is Ribonuclease pancreatic (RNASE1).